Consider the following 517-residue polypeptide: Protein ERGIC-53 (517 aa).

Residues 1–30 (MAVSRRRGPQAGAQSFFCALLLSFSQFVGS) form the signal peptide. Residues 31-484 (DGMGGDAAAP…DLPAFPSCLS (454 aa)) lie on the Lumenal side of the membrane. An L-type lectin-like domain is found at 52-275 (RRFEYKYSFK…DVLSFLTFQL (224 aa)). Positions 96 and 129 each coordinate a carbohydrate. Ca(2+)-binding residues include Asp-160, Phe-162, Asp-163, Asn-164, Asp-165, Asn-169, and Asn-170. Residue Asn-164 coordinates a carbohydrate. His-186 lines the a carbohydrate pocket. Asp-189 lines the Ca(2+) pocket. Cys-198 and Cys-238 are oxidised to a cystine. An a carbohydrate-binding site is contributed by 259-261 (GGL). Disordered stretches follow at residues 276–297 (TEPG…KEKY) and 377–396 (EISR…SQQE). The segment covering 278 to 297 (PGKEPPTPEKDISEKEKEKY) has biased composition (basic and acidic residues). Position 433 is a phosphoserine (Ser-433). Residues 485–505 (TVHFVIFIVVQTVLFIGYIMY) form a helical membrane-spanning segment. The Cytoplasmic portion of the chain corresponds to 506 to 517 (RTQQEAAAKKFF). The segment at 506 to 517 (RTQQEAAAKKFF) is mediates interaction with RAB3GAP1, RAB3GAP2 and UBXN6. The ER export motif signature appears at 516–517 (FF).

In terms of assembly, exists both as a covalent disulfide-linked homohexamer, and a complex of three disulfide-linked dimers non-covalently kept together. Interacts with MCFD2. May interact with TMEM115. Interacts with RAB3GAP1 and RAB3GAP2. Interacts with UBXN6. Interacts with SERPINA1/alpha1-antitrypsin. Interacts with BET1.

It localises to the endoplasmic reticulum-Golgi intermediate compartment membrane. The protein localises to the golgi apparatus membrane. Its subcellular location is the endoplasmic reticulum membrane. Mannose-specific lectin. May recognize sugar residues of glycoproteins, glycolipids, or glycosylphosphatidyl inositol anchors and may be involved in the sorting or recycling of proteins, lipids, or both. The LMAN1-MCFD2 complex forms a specific cargo receptor for the ER-to-Golgi transport of selected proteins. This chain is Protein ERGIC-53 (Lman1), found in Rattus norvegicus (Rat).